The chain runs to 137 residues: Probable DNA-directed RNA polymerases I, II, and III subunit RPABC2 (137 aa).

Composition is skewed to acidic residues over residues 1–27 (MADE…VIEE) and 34–43 (NEDEDDDNVD). A disordered region spans residues 1–43 (MADEDDYQDMDNDDFVDDNEMEDVIEEDPQRPDNEDEDDDNVD).

It belongs to the archaeal Rpo6/eukaryotic RPB6 RNA polymerase subunit family. In terms of assembly, component of the RNA polymerase I (Pol I), RNA polymerase II (Pol II) and RNA polymerase III (Pol III) complexes consisting of at least 13, 12 and 17 subunits, respectively.

It localises to the nucleus. Its function is as follows. DNA-dependent RNA polymerases catalyze the transcription of DNA into RNA using the four ribonucleoside triphosphates as substrates. Common component of RNA polymerases I, II and III which synthesize ribosomal RNA precursors, mRNA precursors and many functional non-coding RNAs, and small RNAs, such as 5S rRNA and tRNAs, respectively. Pol II is the central component of the basal RNA polymerase II transcription machinery. Pols are composed of mobile elements that move relative to each other. In Pol II, RPB6 is part of the clamp element and together with parts of RPB1 and RPB2 forms a pocket to which the RPB4-RPB7 subcomplex binds. The polypeptide is Probable DNA-directed RNA polymerases I, II, and III subunit RPABC2 (rpb-6) (Caenorhabditis elegans).